The following is a 6781-amino-acid chain: Replicase polyprotein 1ab (6781 aa).

In terms of domain architecture, CoV Nsp1 globular spans 2-109 (ASNHVTLAFA…ELELTFGRRG (108 aa)). Residues glutamate 59, asparagine 95, glutamate 99, and glutamate 102 each contribute to the ssDNA site. Residues 112-364 (IVPVDQYMCG…TKLKFDILSG (253 aa)) form the CoV Nsp2 N-terminal domain. In terms of domain architecture, CoV Nsp2 middle spans 383–776 (SALVDIVDDA…AEMYNTYLST (394 aa)). In terms of domain architecture, CoV Nsp2 C-terminal spans 778-895 (VENLVLAGVS…VPICFKKKGG (118 aa)). The region spanning 896 to 991 (GDVKFSDEVS…VMVSQWPLND (96 aa)) is the Ubiquitin-like 1 domain. A disordered region spans residues 1009 to 1040 (IDSEGDEVDSSAPEKVADVANSEPGDDGLPVA). The 240-residue stretch at 1057-1296 (SFIKDTPSTV…EPVVKPFYSY (240 aa)) folds into the Peptidase C16 1 domain. Cysteine 1091 serves as the catalytic For PL1-PRO activity. The C4-type 1; degenerate zinc finger occupies 1162-1193 (CGCGTGERIYEGCAFRMTPTLEPFPYGACAQC). Active-site for PL1-PRO activity residues include histidine 1239 and aspartate 1252. A Macro domain is found at 1297-1465 (KNVDFYQGDF…IFKEALVDTT (169 aa)). A Ubiquitin-like 2 domain is found at 1630–1685 (NKSVVIKVTEDTRSVKAVKVESTATYGQQIGPCLVNDTVVTDNKPVVADVVAKVVP). One can recognise a Peptidase C16 2 domain in the interval 1691–1951 (SHYGFDKAGE…LLDTMNYASE (261 aa)). Residue cysteine 1729 is the For PL2-PRO activity of the active site. The C4-type 2; degenerate zinc-finger motif lies at 1808 to 1838 (DGCCCSKRVVTAPVVNASVLKLGVEDGLCPH). Residues histidine 1888 and aspartate 1901 each act as for PL2-PRO activity in the active site. The next 2 membrane-spanning stretches (helical) occupy residues 1959-1979 (FMSRNLITVFLYILSILGLCF) and 2022-2042 (WFKVLGKFSLGIYALYALLFM). An HD1 region spans residues 1959 to 2170 (FMSRNLITVF…FGDEIVVFFI (212 aa)). The 3Ecto domain occupies 2038 to 2102 (ALLFMTIRFT…TQVVWQHLRD (65 aa)). Cystine bridges form between cysteine 2054/cysteine 2080 and cysteine 2072/cysteine 2077. 3 consecutive transmembrane segments (helical) span residues 2105–2125 (IGNVMPFFYLAFLAIFGGVYV), 2127–2147 (AITLYFIFQYLNSLGVFLGLQ), and 2150–2170 (IWFLQLVPFDVFGDEIVVFFI). Positions 2176–2266 (MFIKHVCLGC…VVKLNVQPTG (91 aa)) are Y1. Residues 2176-2516 (MFIKHVCLGC…PTVCIANKKG (341 aa)) form the CoV Nsp3 Y domain. Positions 2180, 2185, 2190, 2193, 2226, 2229, 2233, and 2236 each coordinate Zn(2+). A ZF1 region spans residues 2180 to 2193 (HVCLGCDKASCVAC). Residues 2226–2236 (CKKHNFFCLNC) are ZF2. Residues 2267 to 2356 (PATILIDKVE…LVDSALLASL (90 aa)) are Y2. A coV-Y region spans residues 2267 to 2516 (PATILIDKVE…PTVCIANKKG (250 aa)). Positions 2357–2414 (SVDFGASLHSAFVSVLSNSFGKDLSSCNDMQDCKSTLGFDDVPLDTFNAAVAEAHRYD) are Y3. Positions 2415–2516 (VLLTDMSFNN…PTVCIANKKG (102 aa)) are Y4. Transmembrane regions (helical) follow at residues 2528–2548 (FFWFLCLFIVAAFFALSFLDF), 2619–2639 (IPAGVYLAGKTLVFAINTIFG), 2654–2674 (GACIFNSACTTLSGLGGTAVY), 2754–2774 (GSDFVCGTGLFTLLMNVISVF), 2787–2807 (ILFNCIIAFVAVAVCFLFTKF), 2814–2834 (MSVGVFTVGACTLLNNVSYIV), and 2863–2883 (LGFLISYILIAPWWVLMVYAF). Residues 2528-2883 (FFWFLCLFIV…PWWVLMVYAF (356 aa)) are HD2. In terms of domain architecture, Nsp4C spans 2902 to 2997 (LFEGDKFVGS…PTVSYNSTLQ (96 aa)). Positions 2998–3299 (AGLRKMAQPS…VRQMYGVNLQ (302 aa)) constitute a Peptidase C30 domain. Residues histidine 3038 and cysteine 3141 each act as for 3CL-PRO activity in the active site. 7 helical membrane passes run 3336–3356 (GYVTPMFACLSLLSSLLMFTL), 3361–3381 (LFFQVFLIPALIVTSCINLAF), 3399–3419 (LMGFNAQGLVNIFVCFVVTIL), 3431–3451 (PASSVTYVVALLTAAYNYFYA), 3454–3474 (ILSCAMTLFASVTGNWFVGAV), 3476–3496 (YKVAVYMALRFPTFVAIFGDI), and 3500–3520 (MFCYLVLGYFTCCFYGILYWF). The interval 3336–3520 (GYVTPMFACL…CCFYGILYWF (185 aa)) is HD3. The RdRp Nsp7 cofactor domain maps to 3580–3662 (SKLTDIKCSN…SYFNDNSMLQ (83 aa)). The RdRp Nsp8 cofactor domain maps to 3663 to 3857 (SVASTYVGLP…LGCERIVKLQ (195 aa)). One can recognise a Nsp9 ssRNA-binding domain in the interval 3858–3965 (NNEIIPGKLK…GYIGATVRLQ (108 aa)). One can recognise an ExoN/MTase coactivator domain in the interval 3966–4103 (AGKQTEQAIN…CDRSIMQSTD (138 aa)). The Zn(2+) site is built by cysteine 4039, cysteine 4042, histidine 4048, cysteine 4055, cysteine 4081, cysteine 4084, cysteine 4092, and cysteine 4094. Zinc fingers lie at residues 4039–4055 (CLYCRAHVEHPSMDGFC) and 4081–4094 (CKVCGCWLSNGCTC). The NiRAN domain maps to 4106-4355 (YLNRVRGSSA…ASECFVKSDI (250 aa)). The 99-residue stretch at 4361-4459 (KSYDLLEYDF…WNNDLNLHSS (99 aa)) folds into the Nsp12 Interface domain. Histidine 4390, cysteine 4396, cysteine 4401, cysteine 4405, and cysteine 4582 together coordinate Zn(2+). A Nsp12 RNA-dependent RNA polymerase domain is found at 4460–5027 (RLSINELLQF…NMYEKSAVLQ (568 aa)). The segment at 4462–4676 (SINELLQFCS…HQKHLKSIVN (215 aa)) is rdRp Fingers N-ter. A rdRp Palm N-ter region spans residues 4677-4715 (TRGASVVIGTTKFYGGWDNMLKNLIDGVENPCLMGWDYP). The 163-residue stretch at 4707-4869 (PCLMGWDYPK…CYNNDYASLG (163 aa)) folds into the RdRp catalytic domain. Residues 4716–4774 (KCDRALPNMIRMISAMILGSKHTTCCSSTDRFFRLCNELAQVLTEVVYSNGGFYLKPGG) form a rdRp Fingers C-ter region. Residues histidine 4737, cysteine 4740, and cysteine 4741 each contribute to the Zn(2+) site. The segment at 4775–4910 (TTSGDATTAY…NKGPHEFCSQ (136 aa)) is rdRp Palm C-ter. Catalysis depends on for RNA-directed RNA polymerase activity residues serine 4854, aspartate 4855, and aspartate 4856. The tract at residues 4911-5027 (HTMQIVDKEG…NMYEKSAVLQ (117 aa)) is rdRp Thumb. Positions 5028-5140 (SAGLCVVCGS…EDFNRIATSD (113 aa)) constitute a CV ZBD domain. Zn(2+) contacts are provided by cysteine 5032, cysteine 5035, cysteine 5043, cysteine 5046, cysteine 5053, cysteine 5056, histidine 5060, histidine 5066, cysteine 5077, cysteine 5082, cysteine 5099, and histidine 5102. Positions 5275 to 5466 (STIHKLHPAF…MCALKPDVFL (192 aa)) constitute a (+)RNA virus helicase ATP-binding domain. 5310–5317 (GPPGSGKS) lines the ATP pocket. The region spanning 5467–5636 (HKCYRCPAEI…EGCGLFKDCS (170 aa)) is the (+)RNA virus helicase C-terminal domain. Residues 5696 to 5910 (LFCTRDFAMR…RCLAIHDCFV (215 aa)) enclose the ExoN domain. Catalysis depends on for exoribonuclease activity residues aspartate 5714, glutamate 5716, and glutamate 5815. Cysteine 5831, cysteine 5833, cysteine 5849, histidine 5852, histidine 5880, cysteine 5884, and histidine 5887 together coordinate Zn(2+). Residues histidine 5891 and aspartate 5896 each act as for exoribonuclease activity in the active site. Zn(2+) is bound at residue cysteine 5902. Positions 5919 to 6140 (YPFIGNEAVI…NLWQTFSNNL (222 aa)) constitute an N7-MTase domain. Residue 5954–5960 (DIGNPKG) participates in S-adenosyl-L-methionine binding. The segment at 6031–6045 (CNGGSLYVNNHAFHT) is gpppA-binding. 4 residues coordinate Zn(2+): cysteine 6069, cysteine 6086, cysteine 6097, and histidine 6100. The 61-residue stretch at 6142 to 6202 (GLENIAFNVL…NVAFELYAKR (61 aa)) folds into the Nsp15 N-terminal oligomerization domain. The region spanning 6203–6320 (KVGLTPPITI…IYTRKNGKFE (118 aa)) is the AV-Nsp11N/CoV-Nsp15M domain. Positions 6337-6477 (SPRSDMEKDF…KDHKLQTFYP (141 aa)) constitute a NendoU domain. Catalysis depends on for uridylate-specific endoribonuclease activity residues histidine 6367, histidine 6382, and lysine 6423. The region spanning 6481 to 6777 (ASEWKCGYSM…AICGFSNHLV (297 aa)) is the Nidovirus-type SAM-dependent 2'-O-MTase domain. Residues lysine 6525, aspartate 6609, lysine 6649, and glutamate 6682 each act as for 2'-O-methyltransferase in the active site.

It belongs to the coronaviruses polyprotein 1ab family. Interacts with PL-PRO and nsp6. In terms of assembly, monomer. Homodimer; disulfide-linked. As to quaternary structure, interacts with nsp8 and nsp12 to form the replication-transcription complex (RTC): nsp12, nsp7, two subunits of nsp8, and up to two subunits of nsp13. Eight copies of nsp7 and eight copies of nsp8 assemble to form a heterohexadecamer dsRNA-encircling ring structure. Interacts with nsp7, nsp13 and nsp12 to form the replication-transcription complex (RTC): nsp12, nsp7, two subunits of nsp8, and up to two subunits of nsp13. Eight copies of nsp7 and eight copies of nsp8 assemble to form a heterohexadecamer dsRNA-encircling ring structure. In terms of assembly, homodimer. As to quaternary structure, forms a dodecamer and interacts with nsp14 and nsp16; these interactions enhance nsp14 and nsp16 enzymatic activities. Mn(2+) is required as a cofactor. In terms of processing, specific enzymatic cleavages in vivo by its own proteases yield mature proteins. 3CL-PRO and PL-PRO proteinases are autocatalytically processed.

It is found in the host cytoplasm. Its subcellular location is the host nucleus. The protein localises to the host membrane. It localises to the host perinuclear region. The protein resides in the host endoplasmic reticulum. It is found in the host endoplasmic reticulum-Golgi intermediate compartment. The enzyme catalyses Thiol-dependent hydrolysis of ester, thioester, amide, peptide and isopeptide bonds formed by the C-terminal Gly of ubiquitin (a 76-residue protein attached to proteins as an intracellular targeting signal).. The catalysed reaction is a 5'-end diphospho-ribonucleoside in mRNA + GTP + H(+) = a 5'-end (5'-triphosphoguanosine)-ribonucleoside in mRNA + diphosphate. It carries out the reaction RNA(n) + a ribonucleoside 5'-triphosphate = RNA(n+1) + diphosphate. It catalyses the reaction ATP + H2O = ADP + phosphate + H(+). The enzyme catalyses a 5'-end (5'-triphosphoguanosine)-ribonucleoside in mRNA + S-adenosyl-L-methionine = a 5'-end (N(7)-methyl 5'-triphosphoguanosine)-ribonucleoside in mRNA + S-adenosyl-L-homocysteine. The catalysed reaction is uridylyl-uridylyl-ribonucleotide-RNA = a 3'-end uridylyl-2',3'-cyclophospho-uridine-RNA + a 5'-end dephospho-ribonucleoside-RNA. It carries out the reaction a 5'-end (N(7)-methyl 5'-triphosphoguanosine)-ribonucleoside in mRNA + S-adenosyl-L-methionine = a 5'-end (N(7)-methyl 5'-triphosphoguanosine)-(2'-O-methyl-ribonucleoside) in mRNA + S-adenosyl-L-homocysteine + H(+). Inhibited by the substrate-analog Cbz-Val-Asn-Ser-Thr-Leu-Gln-CMK. Inhibited by (R)-16. Multifunctional protein responsible for the transcription of negative stranded RNA, leader RNA, subgenomic mRNAs and progeny virion RNA as well as proteinases responsible for the cleavage of the polyprotein into functional products. In terms of biological role, plays a role in the inhibition of host interferon and pro-inflammatory cytokines production. Suppresses host RELA/p65 activation by blocking NFKBIA phosphorylation. Targets also the RLR pathway downstream of the IRF3 activation by targeting host CREBBP to proteasomal degradation. Its function is as follows. Responsible for the cleavages located at the N-terminus of the replicase polyprotein. Participates together with nsp4 in the assembly of virally-induced cytoplasmic double-membrane vesicles necessary for viral replication. Forms a molecular pore spanning the double membrane of the coronavirus replication organelle. In addition, PLP2 possesses a deubiquitinating/deISGylating activity and processes both 'Lys-48'- and 'Lys-63'-linked polyubiquitin chains from cellular substrates. PLP2 also antagonizes innate immune induction of type I interferon by blocking the nuclear translocation of host IRF-3. Participates in the inhibition of the integrated stress response (ISR) in the infected host cell. Functionally, participates in the assembly of virally-induced cytoplasmic double-membrane vesicles necessary for viral replication. Responsible for the majority of cleavages as it cleaves the C-terminus of replicase polyprotein at 11 sites. Recognizes substrates containing the core sequence [ILMVF]-Q-|-[SGACN]. Also contains an ADP-ribose-1''-phosphate (ADRP)-binding function. Participates in the inhibition of the integrated stress response (ISR) in the infected host cell. In terms of biological role, plays a role in the initial induction of autophagosomes from host endoplasmic reticulum. Later, limits the expansion of these phagosomes that are no longer able to deliver viral components to lysosomes. Its function is as follows. Plays a role in viral RNA synthesis. Forms a hexadecamer with nsp8 (8 subunits of each) that may participate in viral replication by acting as a primase. Alternatively, may synthesize substantially longer products than oligonucleotide primers. Functionally, plays a role in viral RNA synthesis. Forms a hexadecamer with nsp7 (8 subunits of each) that may participate in viral replication by acting as a primase. Alternatively, may synthesize substantially longer products than oligonucleotide primers. Forms a primer, NSP9-pU, which is utilized by the polymerase for the initiation of RNA chains. Interacts with ribosome signal recognition particle RNA (SRP). Together with NSP8, suppress protein integration into the cell membrane, thereby disrupting host immune defenses. In terms of biological role, plays a pivotal role in viral transcription by stimulating both nsp14 3'-5' exoribonuclease and nsp16 2'-O-methyltransferase activities. Therefore plays an essential role in viral mRNAs cap methylation. Its function is as follows. RNA-directed RNA polymerase that catalyzes the transcription of viral genomic and subgenomic RNAs. Acts in complex with nsp7 and nsp8 to transcribe both the minus and positive strands of genomic RNA. The kinase-like NiRAN domain of NSP12 attaches one or more nucleotides to the amino terminus of NSP9, forming a covalent RNA-protein intermediate that serves as transcription/replication primer. Subgenomic RNAs (sgRNAs) are formed by discontinuous transcription: The polymerase has the ability to pause at transcription-regulating sequences (TRS) and jump to the leader TRS, resulting in a major deletion. This creates a series of subgenomic RNAs that are replicated, transcribed and translated. In addition, Nsp12 is a subunit of the viral RNA capping enzyme that catalyzes the RNA guanylyltransferase reaction for genomic and sub-genomic RNAs. Subsequently, the NiRAN domain transfers RNA to GDP, and forms the core cap structure GpppA-RNA. Functionally, plays a role in viral RNA synthesis. Multi-functional protein with a zinc-binding domain in N-terminus displaying RNA and DNA duplex-unwinding activities with 5' to 3' polarity. ATPase activity is strongly stimulated by poly(U), poly(dT), poly(C), poly(dA), but not by poly(G). Plays a role in viral RNA synthesis through two distinct activities. The N7-guanine methyltransferase activity plays a role in the formation of the cap structure GpppA-RNA. The proofreading exoribonuclease reduces the sensitivity of the virus to RNA mutagens during replication. This activity acts on both ssRNA and dsRNA in a 3'-5' direction. In terms of biological role, plays a role in viral transcription/replication and prevents the simultaneous activation of host cell dsRNA sensors, such as MDA5/IFIH1, OAS, and PKR. Acts by degrading the 5'-polyuridines generated during replication of the poly(A) region of viral genomic and subgenomic RNAs. Catalyzes a two-step reaction in which a 2'3'-cyclic phosphate (2'3'-cP) is first generated by 2'-O transesterification, which is then hydrolyzed to a 3'-phosphate (3'-P). If not degraded, poly(U) RNA would hybridize with poly(A) RNA tails and activate host dsRNA sensors. Decreases the RNA levels and thus the expression of host TBK1 and IRF3, antagonizing the host innate response. In Sus scrofa (Pig), this protein is Replicase polyprotein 1ab (rep).